Reading from the N-terminus, the 392-residue chain is S-adenosylmethionine synthase (392 aa).

Histidine 17 is an ATP binding site. Aspartate 19 contacts Mg(2+). Glutamate 45 lines the K(+) pocket. Positions 58 and 102 each coordinate L-methionine. A flexible loop region spans residues 102–112 (QSADIAQGVDA). Residues 169 to 171 (DAK), 235 to 236 (KF), aspartate 244, 250 to 251 (RK), alanine 267, and lysine 271 contribute to the ATP site. Aspartate 244 is an L-methionine binding site. Lysine 275 contributes to the L-methionine binding site.

This sequence belongs to the AdoMet synthase family. Homotetramer; dimer of dimers. The cofactor is Mg(2+). It depends on K(+) as a cofactor.

It localises to the cytoplasm. It carries out the reaction L-methionine + ATP + H2O = S-adenosyl-L-methionine + phosphate + diphosphate. It functions in the pathway amino-acid biosynthesis; S-adenosyl-L-methionine biosynthesis; S-adenosyl-L-methionine from L-methionine: step 1/1. In terms of biological role, catalyzes the formation of S-adenosylmethionine (AdoMet) from methionine and ATP. The overall synthetic reaction is composed of two sequential steps, AdoMet formation and the subsequent tripolyphosphate hydrolysis which occurs prior to release of AdoMet from the enzyme. The protein is S-adenosylmethionine synthase of Methylobacterium sp. (strain 4-46).